Reading from the N-terminus, the 429-residue chain is Glutamate-1-semialdehyde 2,1-aminomutase 1 (429 aa).

An N6-(pyridoxal phosphate)lysine modification is found at K268.

The protein belongs to the class-III pyridoxal-phosphate-dependent aminotransferase family. HemL subfamily. As to quaternary structure, homodimer. Pyridoxal 5'-phosphate serves as cofactor.

The protein resides in the cytoplasm. It catalyses the reaction (S)-4-amino-5-oxopentanoate = 5-aminolevulinate. The protein operates within porphyrin-containing compound metabolism; protoporphyrin-IX biosynthesis; 5-aminolevulinate from L-glutamyl-tRNA(Glu): step 2/2. The protein is Glutamate-1-semialdehyde 2,1-aminomutase 1 of Staphylococcus haemolyticus (strain JCSC1435).